The primary structure comprises 304 residues: Non-specific ribonucleoside hydrolase RihC (304 aa).

Residue H233 is part of the active site.

The protein belongs to the IUNH family. RihC subfamily.

Functionally, hydrolyzes both purine and pyrimidine ribonucleosides with a broad-substrate specificity. The chain is Non-specific ribonucleoside hydrolase RihC from Escherichia coli O6:H1 (strain CFT073 / ATCC 700928 / UPEC).